A 490-amino-acid chain; its full sequence is MQFSTFQTNLDNWQGASLIFGVLEEEIASQLENIKFVVDPKLLLKKVTQKKFKGEKGKTLSFEFLDQKLETLIIVGLGKSKDLNKSDIENSIGNLVRKTVDKNAKISILLPWELINSQLEITKLAESARLSAYKDNRFNKKKDEKKVLKEIEFLNLKQFENISFEETAQICEGVELARKLVAAPPNSLTPQEMSLQASKIAKDHGLEVKILEAKDCEDLEMGAYLAVAKGSDLDPKFIHLTLKSEGPIKEKIALVGKGLTFDSGGYNLKVGASQIEMMKYDMGGSAAVLGAAKALGAIKPKGLEIHFIVAACENMINGSAVHPGDVVKASNGKTIEINNTDAEGRLTLADALTYASNLNPDSIIDLATLTGAIVVALGNDVAGFWSNNDDLANDLKAASAQSGEKLWQMPLQKSYKEGLKSHIADMKNTGPRAGGSITAALFLEEFFDSEIKWAHIDIAGTCWTDKNKGINPSGATGFGVKTLVQWIKNK.

Mn(2+) is bound by residues Lys257 and Asp262. Residue Lys269 is part of the active site. Mn(2+) is bound by residues Asp281, Asp341, and Glu343. Residue Arg345 is part of the active site.

This sequence belongs to the peptidase M17 family. Mn(2+) serves as cofactor.

The protein resides in the cytoplasm. The enzyme catalyses Release of an N-terminal amino acid, Xaa-|-Yaa-, in which Xaa is preferably Leu, but may be other amino acids including Pro although not Arg or Lys, and Yaa may be Pro. Amino acid amides and methyl esters are also readily hydrolyzed, but rates on arylamides are exceedingly low.. The catalysed reaction is Release of an N-terminal amino acid, preferentially leucine, but not glutamic or aspartic acids.. Its function is as follows. Presumably involved in the processing and regular turnover of intracellular proteins. Catalyzes the removal of unsubstituted N-terminal amino acids from various peptides. This chain is Probable cytosol aminopeptidase, found in Prochlorococcus marinus (strain AS9601).